The following is a 174-amino-acid chain: Large ribosomal subunit protein uL16 (174 aa).

The protein belongs to the universal ribosomal protein uL16 family.

In Staphylothermus marinus (strain ATCC 43588 / DSM 3639 / JCM 9404 / F1), this protein is Large ribosomal subunit protein uL16.